The sequence spans 221 residues: Glutathione S-transferase class-mu 26 kDa isozyme 1 (221 aa).

In terms of domain architecture, GST N-terminal spans 2–82; sequence PAKLGYWKIR…YIADKHGMIG (81 aa). Residues 7–8, 40–44, 53–54, and 66–67 each bind glutathione; these read YW, WFSKK, NL, and QS. The region spanning 84-202 is the GST C-terminal domain; the sequence is TPEERARVSM…ESNRFIKWPL (119 aa). Tyr-110 contacts substrate.

It belongs to the GST superfamily. Mu family. In terms of assembly, homodimer.

It catalyses the reaction RX + glutathione = an S-substituted glutathione + a halide anion + H(+). Conjugation of reduced glutathione to a wide number of exogenous and endogenous hydrophobic electrophiles. Its function is as follows. GST isoenzymes appear to play a central role in the parasite detoxification system. Other functions are also suspected including a role in increasing the solubility of haematin in the parasite gut. This Fasciola hepatica (Liver fluke) protein is Glutathione S-transferase class-mu 26 kDa isozyme 1.